Here is a 450-residue protein sequence, read N- to C-terminus: Ribosomal protein uS12 methylthiotransferase RimO (450 aa).

Residues 16–126 (PRISFVSLGC…VLDAVHQAVP (111 aa)) form the MTTase N-terminal domain. [4Fe-4S] cluster contacts are provided by Cys25, Cys61, Cys90, Cys157, Cys161, and Cys164. A Radical SAM core domain is found at 143–380 (LTPRHYAYLK…MLKQQAISAR (238 aa)). The region spanning 383-449 (KRKVGTRQQV…AYDLIGSAVG (67 aa)) is the TRAM domain.

This sequence belongs to the methylthiotransferase family. RimO subfamily. It depends on [4Fe-4S] cluster as a cofactor.

Its subcellular location is the cytoplasm. The enzyme catalyses L-aspartate(89)-[ribosomal protein uS12]-hydrogen + (sulfur carrier)-SH + AH2 + 2 S-adenosyl-L-methionine = 3-methylsulfanyl-L-aspartate(89)-[ribosomal protein uS12]-hydrogen + (sulfur carrier)-H + 5'-deoxyadenosine + L-methionine + A + S-adenosyl-L-homocysteine + 2 H(+). In terms of biological role, catalyzes the methylthiolation of an aspartic acid residue of ribosomal protein uS12. The sequence is that of Ribosomal protein uS12 methylthiotransferase RimO from Azorhizobium caulinodans (strain ATCC 43989 / DSM 5975 / JCM 20966 / LMG 6465 / NBRC 14845 / NCIMB 13405 / ORS 571).